The chain runs to 508 residues: MQYKDLRDFIGQLEGLGELRRIARPVSPNLEMTEICDRLLRAGGPAVVFEQPAGAPHGDIYSVPVLANLFGTTRRVAFGMGAESMEDLRDIGRVLSALKEPEPPRGLREAGKLFTLAKSVWDMAPKRVSGPACQEVVWEGNDVDLARLPIQTCWPGDAAPLITWGLVVTKGPHKKRQNLGIYRQQVIGRNQVIMRWLAHRGGALDFREHALANPGKPFPIAVALGADPATILGAVTPVPDTLSEYQFAGLLRGSRTALAGCLTPTLSELSVPASAEIVLEGHIQPDPNHPSGYQHALEGPFGDHTGYYNEQDWFPVFTIDRITMRRDPIYHSTYTGKPPDEPAVLGVALNEVFVPLLQKQFPEITDFYLPPEGCSYRMALVRMKKQYAGHAKRVMFGVWSFLRQFMYTKFIVVVDDDVDVRDWKEVIWAITTRVDPSRDTVLVDNTPIDYLDFASPVSGLGSKMGIDATDKWPGETTREWGTSIAMDAAVKAKVDTLWETLFERPAGR.

N178 provides a ligand contact to Mn(2+). Prenylated FMN-binding positions include 181 to 183 (IYR), 195 to 197 (RWL), and 200 to 201 (RG). E244 lines the Mn(2+) pocket. The Proton donor role is filled by D303.

The protein belongs to the UbiD family. As to quaternary structure, homohexamer. Requires prenylated FMN as cofactor. Mn(2+) serves as cofactor.

It is found in the cell membrane. The catalysed reaction is a 4-hydroxy-3-(all-trans-polyprenyl)benzoate + H(+) = a 2-(all-trans-polyprenyl)phenol + CO2. The protein operates within cofactor biosynthesis; ubiquinone biosynthesis. Its function is as follows. Catalyzes the decarboxylation of 3-octaprenyl-4-hydroxy benzoate to 2-octaprenylphenol, an intermediate step in ubiquinone biosynthesis. The chain is 3-octaprenyl-4-hydroxybenzoate carboxy-lyase from Cupriavidus taiwanensis (strain DSM 17343 / BCRC 17206 / CCUG 44338 / CIP 107171 / LMG 19424 / R1) (Ralstonia taiwanensis (strain LMG 19424)).